Reading from the N-terminus, the 492-residue chain is Probable cytosol aminopeptidase (492 aa).

Lys-262 and Asp-267 together coordinate Mn(2+). The active site involves Lys-274. Mn(2+) contacts are provided by Asp-286, Asp-345, and Glu-347. The active site involves Arg-349.

The protein belongs to the peptidase M17 family. Mn(2+) serves as cofactor.

Its subcellular location is the cytoplasm. The catalysed reaction is Release of an N-terminal amino acid, Xaa-|-Yaa-, in which Xaa is preferably Leu, but may be other amino acids including Pro although not Arg or Lys, and Yaa may be Pro. Amino acid amides and methyl esters are also readily hydrolyzed, but rates on arylamides are exceedingly low.. The enzyme catalyses Release of an N-terminal amino acid, preferentially leucine, but not glutamic or aspartic acids.. Presumably involved in the processing and regular turnover of intracellular proteins. Catalyzes the removal of unsubstituted N-terminal amino acids from various peptides. This Acaryochloris marina (strain MBIC 11017) protein is Probable cytosol aminopeptidase.